The sequence spans 258 residues: Acetylglutamate kinase (258 aa).

Substrate is bound by residues 44 to 45, arginine 66, and asparagine 158; that span reads GG. Residues 181 to 186 and 209 to 211 contribute to the ATP site; these read DVSGIL and IIT.

Belongs to the acetylglutamate kinase family. ArgB subfamily. In terms of assembly, homodimer.

It is found in the cytoplasm. It catalyses the reaction N-acetyl-L-glutamate + ATP = N-acetyl-L-glutamyl 5-phosphate + ADP. It functions in the pathway amino-acid biosynthesis; L-arginine biosynthesis; N(2)-acetyl-L-ornithine from L-glutamate: step 2/4. Catalyzes the ATP-dependent phosphorylation of N-acetyl-L-glutamate. This is Acetylglutamate kinase from Shigella flexneri serotype 5b (strain 8401).